The primary structure comprises 264 residues: 14-3-3 protein homolog (264 aa).

Positions 236-258 (SEAPAATEEQQQSSQAPAAQPTE) are enriched in low complexity. The interval 236-264 (SEAPAATEEQQQSSQAPAAQPTEGKADQE) is disordered.

This sequence belongs to the 14-3-3 family.

The sequence is that of 14-3-3 protein homolog (BMH1) from Candida albicans (strain SC5314 / ATCC MYA-2876) (Yeast).